Consider the following 2281-residue polypeptide: Protein Ycf2 (2281 aa).

1635–1642 is an ATP binding site; that stretch reads GSIGSGRS.

The protein belongs to the Ycf2 family.

The protein resides in the plastid. Its subcellular location is the chloroplast stroma. In terms of biological role, probable ATPase of unknown function. Its presence in a non-photosynthetic plant (Epifagus virginiana) and experiments in tobacco indicate that it has an essential function which is probably not related to photosynthesis. This is Protein Ycf2 from Coffea arabica (Arabian coffee).